The chain runs to 678 residues: RNA helicase NPH-II (678 aa).

A Helicase ATP-binding domain is found at 175 to 351 (FTSWARRVPV…EFFAESVFVH (177 aa)). 188-195 (GDTGVGKT) serves as a coordination point for ATP. The DEXH box motif lies at 300–303 (DEVH). The region spanning 371 to 546 (PLNRFMYIEE…VFDLQLPEDL (176 aa)) is the Helicase C-terminal domain.

It belongs to the DEAD box helicase family. DEAH subfamily. As to quaternary structure, monomer.

The protein resides in the virion. It carries out the reaction ATP + H2O = ADP + phosphate + H(+). Its function is as follows. NTP-dependent helicase that catalyzes unidirectional unwinding of 3'tailed duplex RNAs and plays an important role during transcription of early mRNAs, presumably by preventing R-loop formation behind the elongating RNA polymerase. Might also play a role in the export of newly synthesized mRNA chains out of the core into the cytoplasm. Required for replication and propagation of viral particles. The polypeptide is RNA helicase NPH-II (OPG084) (Oryctolagus cuniculus (Rabbit)).